The following is a 931-amino-acid chain: Neuropilin-2 (931 aa).

The segment at residues 1-20 (MDMFPLTWVFLALYFSRHQV) is a signal peptide (or 22). Over 21 to 864 (RGQPDPPCGG…EKSWLYTLDP (844 aa)) the chain is Extracellular. Intrachain disulfides connect C28/C55, C83/C105, and C149/C175. CUB domains follow at residues 28 to 142 (CGGR…YEIF) and 149 to 267 (CSKN…YYLV). 2 N-linked (GlcNAc...) asparagine glycosylation sites follow: N152 and N157. E197, D211, and D252 together coordinate Ca(2+). The cysteines at positions 208 and 230 are disulfide-linked. Disulfide bonds link C277–C427 and C434–C592. F5/8 type C domains lie at 277–427 (CNVP…LFGC) and 434–592 (CSNM…VLGC). Over residues 298–310 (TYSDGRWTPQQSR) the composition is skewed to polar residues. The segment at 298–317 (TYSDGRWTPQQSRLHGDDNG) is disordered. Residues 601–622 (VETLGPTVKSEETTTPYPTEEE) form a disordered region. A glycan (N-linked (GlcNAc...) asparagine) is linked at N629. An MAM domain is found at 642–802 (SGFNCNFDFL…TDVPLENCME (161 aa)). An N-linked (GlcNAc...) asparagine glycan is attached at N839. A helical membrane pass occupies residues 865–889 (ILITIIAMSSLGVLLGATCAGLLLY). The Cytoplasmic portion of the chain corresponds to 890–931 (CTCSYSGLSSRSCTTLENYNFELYDGLKHKVKMNHQKCCSEA).

This sequence belongs to the neuropilin family. In terms of assembly, heterodimer with NRP1. Binds PLXNB1. As to quaternary structure, (Microbial infection) Interacts with human cytomegalovirus proteins gL, UL128, UL130 and UL131A.

Its subcellular location is the membrane. It localises to the secreted. Its function is as follows. High affinity receptor for semaphorins 3C, 3F, VEGF-165 and VEGF-145 isoforms of VEGF, and the PLGF-2 isoform of PGF. (Microbial infection) Acts as a receptor for human cytomegalovirus pentamer-dependent entry in epithelial and endothelial cells. In Homo sapiens (Human), this protein is Neuropilin-2 (NRP2).